Here is a 161-residue protein sequence, read N- to C-terminus: Allophycocyanin beta chain (161 aa).

Asn-71 is modified (N4-methylasparagine). Residue Cys-81 participates in (2R,3E)-phycocyanobilin binding.

The protein belongs to the phycobiliprotein family. Heterodimer of an alpha and a beta chain. Post-translationally, contains one covalently linked phycocyanobilin chromophore.

The protein resides in the plastid. It is found in the cyanelle thylakoid membrane. Light-harvesting photosynthetic bile pigment-protein from the phycobiliprotein complex. Allophycocyanin has a maximum absorption at approximately 650 nanometers. The protein is Allophycocyanin beta chain (apcB) of Cyanophora paradoxa.